The primary structure comprises 504 residues: Signal recognition particle receptor FtsY (504 aa).

Disordered regions lie at residues 1-71 (MFNW…DDYL) and 116-135 (ESDQ…TEIT). GTP is bound by residues 308-315 (GVNGAGKT), 391-395 (DTAGR), and 455-458 (TKLD).

It belongs to the GTP-binding SRP family. FtsY subfamily. In terms of assembly, part of the signal recognition particle protein translocation system, which is composed of SRP and FtsY.

The protein resides in the cell inner membrane. The protein localises to the cytoplasm. It carries out the reaction GTP + H2O = GDP + phosphate + H(+). Its function is as follows. Involved in targeting and insertion of nascent membrane proteins into the cytoplasmic membrane. Acts as a receptor for the complex formed by the signal recognition particle (SRP) and the ribosome-nascent chain (RNC). This is Signal recognition particle receptor FtsY from Synechocystis sp. (strain ATCC 27184 / PCC 6803 / Kazusa).